The sequence spans 49 residues: Fungus-induced-related protein 16 (49 aa).

The chain is Fungus-induced-related protein 16 (fipr-16) from Caenorhabditis elegans.